The sequence spans 311 residues: Olfactory receptor 1D4 (311 aa).

The Extracellular segment spans residues 1-25 (MDGDNQSENSQFLLLGISESPEQQQ). The N-linked (GlcNAc...) asparagine glycan is linked to asparagine 5. The helical transmembrane segment at 26-49 (ILFWMFLSMYLVTVLGNVLIILAI) threads the bilayer. At 50-57 (SSDSHLHT) the chain is on the cytoplasmic side. A helical transmembrane segment spans residues 58–79 (PMYFFLANLSFTDLFFVTNTIP). Residues 80-100 (KMLVNFQSQNKAISYAGCLTQ) are Extracellular-facing. Residues cysteine 97 and cysteine 189 are joined by a disulfide bond. The helical transmembrane segment at 101–120 (LYFLVSLVTLDNLILAVMAY) threads the bilayer. Residues 121–140 (DRYVAICCPLHYVTAMSPGL) lie on the Cytoplasmic side of the membrane. A helical membrane pass occupies residues 141 to 158 (CVLLLSLCWGLSVLYGLL). Residues 159–196 (LTFLLTRVTFCGPREIHYLFCDMYILLWLACSNTHIIH) lie on the Extracellular side of the membrane. Residues 197–220 (TALIATGCFIFLTLLGFMTTSYVR) form a helical membrane-spanning segment. At 221–237 (IVRTILQMPSASKKYKT) the chain is on the cytoplasmic side. The helical transmembrane segment at 238–260 (FSTCASHLGVVSLFYGTLAMVYL) threads the bilayer. Residues 261–271 (QPLHTYSMKDS) lie on the Extracellular side of the membrane. A helical membrane pass occupies residues 272 to 291 (VATVMYAVLTPMMNPFIYSL). The Cytoplasmic segment spans residues 292 to 311 (RNKDMHGAPGRVLWRPFQRP).

The protein belongs to the G-protein coupled receptor 1 family.

It localises to the cell membrane. Odorant receptor. The protein is Olfactory receptor 1D4 (OR1D4) of Homo sapiens (Human).